The following is a 184-amino-acid chain: Elongation factor P 1 (184 aa).

This sequence belongs to the elongation factor P family.

The protein localises to the cytoplasm. The protein operates within protein biosynthesis; polypeptide chain elongation. Involved in peptide bond synthesis. Stimulates efficient translation and peptide-bond synthesis on native or reconstituted 70S ribosomes in vitro. Probably functions indirectly by altering the affinity of the ribosome for aminoacyl-tRNA, thus increasing their reactivity as acceptors for peptidyl transferase. This is Elongation factor P 1 (efp1) from Protochlamydia amoebophila (strain UWE25).